The following is a 226-amino-acid chain: LysM and putative peptidoglycan-binding domain-containing protein 1 (226 aa).

A phosphoserine mark is found at serine 23 and serine 33. In terms of domain architecture, LysM spans 40-84; that stretch reads LEHQLEPGDTLAGLALKYGVTMEQIKRTNRLYTNDSIFLKKTLYI. The disordered stretch occupies residues 95-156; sequence NGLDSEEEND…PSHDLSASDF (62 aa). Residues 98 to 107 show a composition bias toward acidic residues; that stretch reads DSEEENDGEE. A Phosphoserine modification is found at serine 99. Residues 142-151 show a composition bias toward polar residues; the sequence is QETSTPSHDL. A phosphoserine mark is found at serine 165, serine 180, serine 193, and serine 211. The interval 170-226 is disordered; sequence AAAQKLRKGESGVPEEDTGLYPSSPRMQQRAVLGPVPLTRTSRTQTLRDQEDEIFKL. Residues 215-226 show a composition bias toward basic and acidic residues; sequence TLRDQEDEIFKL.

The sequence is that of LysM and putative peptidoglycan-binding domain-containing protein 1 (Lysmd1) from Mus musculus (Mouse).